We begin with the raw amino-acid sequence, 501 residues long: Acetylcholine receptor subunit beta (501 aa).

The signal sequence occupies residues 1–23 (MALGALLLILGILGTPLAPGARG). At 24–244 (SEAEGQLLKK…VIFYLIIRRK (221 aa)) the chain is on the extracellular side. Cysteines 151 and 165 form a disulfide. An N-linked (GlcNAc...) asparagine glycan is attached at Asn-164. 3 helical membrane passes run 245–269 (PLFY…VFYL), 277–295 (MGLS…LLLA), and 311–332 (YLMF…VLNL). Over 333–469 (HHRSPHTHQM…WQFVAMVVDR (137 aa)) the chain is Cytoplasmic. Residues 362-381 (RPKPERDQLPEPHHSFSPRS) are disordered. The segment covering 363–375 (PKPERDQLPEPHH) has biased composition (basic and acidic residues). At Tyr-390 the chain carries Phosphotyrosine; by Tyr-kinases. Residues 470–488 (LFLWTFIVFTSVGTLVIFL) form a helical membrane-spanning segment.

This sequence belongs to the ligand-gated ion channel (TC 1.A.9) family. Acetylcholine receptor (TC 1.A.9.1) subfamily. Beta-1/CHRNB1 sub-subfamily. In terms of assembly, pentamer of two alpha chains, and one each of the beta, delta, and gamma (in immature muscle) or epsilon (in mature muscle) chains. The muscle heteropentamer composed of alpha-1, beta-1, delta, epsilon subunits interacts with the alpha-conotoxin ImII.

The protein resides in the postsynaptic cell membrane. It localises to the cell membrane. It catalyses the reaction K(+)(in) = K(+)(out). The enzyme catalyses Na(+)(in) = Na(+)(out). Functionally, after binding acetylcholine, the AChR responds by an extensive change in conformation that affects all subunits and leads to opening of an ion-conducting channel across the plasma membrane. This chain is Acetylcholine receptor subunit beta (Chrnb1), found in Rattus norvegicus (Rat).